Here is a 100-residue protein sequence, read N- to C-terminus: UPF0213 protein YhbQ (100 aa).

One can recognise a GIY-YIG domain in the interval Thr2 to Arg77.

This sequence belongs to the UPF0213 family.

The sequence is that of UPF0213 protein YhbQ from Escherichia coli O7:K1 (strain IAI39 / ExPEC).